Here is a 408-residue protein sequence, read N- to C-terminus: MTQAELAPSLNTLDFDKKPEETRVVVAMSGGVDSSVVAGLLKQQGYDVLGITLQLYDHGAAVHRAGSCCAGQDIDDARRVCETLGIPHYVLDYEKRFRETVINPFAESYVAGETPIPCVSCNQTVKFADLLATAKELGADALATGHYIRSGRNPSPENPGRRALFRPADADRDQSYFLFATTQEQIDYLRFPLGGLPKAETRRLAEEMGLVVAKKADSQDICFVPQGKYSDVITKLKPNAALAGEIVHLDGRVLGTHEGILHFTIGQRRGIGIATGEPLYVVFLDARSRRVIVGPKEALETHRVYLRDVNWLGDETLAEAAAGKGFACYAKVRSTRAPAPAVLHIDATGTYVDLTVGEAGIAPGQACALYSAPGDNARVFGGGFIERSEREPSAEACLKALLASPVAA.

ATP is bound by residues alanine 27–serine 34 and leucine 53. Cysteine 121 acts as the Nucleophile in catalysis. Cysteine 121 and cysteine 222 form a disulfide bridge. Glycine 145 lines the ATP pocket. The interaction with tRNA stretch occupies residues arginine 172–glutamine 174. The active-site Cysteine persulfide intermediate is cysteine 222.

Belongs to the MnmA/TRMU family.

Its subcellular location is the cytoplasm. The enzyme catalyses S-sulfanyl-L-cysteinyl-[protein] + uridine(34) in tRNA + AH2 + ATP = 2-thiouridine(34) in tRNA + L-cysteinyl-[protein] + A + AMP + diphosphate + H(+). Its function is as follows. Catalyzes the 2-thiolation of uridine at the wobble position (U34) of tRNA, leading to the formation of s(2)U34. The chain is tRNA-specific 2-thiouridylase MnmA from Rhizobium johnstonii (strain DSM 114642 / LMG 32736 / 3841) (Rhizobium leguminosarum bv. viciae).